Here is a 151-residue protein sequence, read N- to C-terminus: Copper transporter 2 (151 aa).

The next 2 membrane-spanning stretches (helical) occupy residues 42 to 62 (GARG…AVLL) and 97 to 117 (VAYL…LAIV).

Belongs to the copper transporter (Ctr) (TC 1.A.56) family. SLC31A subfamily. In terms of assembly, self-interacts. Interacts with SWEET11 and COPT1.

It is found in the cell membrane. Its function is as follows. Involved in the transport of copper, in cooperation with SWEET11 and COPT1. Contributes to the removal of copper (Cu) from xylem, and thus to the sensitivity toward bacterial pathogens such as X.oryzae pv. oryzae (Xoo). This is Copper transporter 2 (COPT2) from Oryza sativa subsp. japonica (Rice).